The primary structure comprises 469 residues: Argininosuccinate lyase (469 aa).

Belongs to the lyase 1 family. Argininosuccinate lyase subfamily.

It localises to the cytoplasm. It carries out the reaction 2-(N(omega)-L-arginino)succinate = fumarate + L-arginine. The protein operates within amino-acid biosynthesis; L-arginine biosynthesis; L-arginine from L-ornithine and carbamoyl phosphate: step 3/3. This chain is Argininosuccinate lyase, found in Paracoccus denitrificans (strain Pd 1222).